Here is a 408-residue protein sequence, read N- to C-terminus: GPI transamidase component GAB1 homolog (408 aa).

The next 10 helical transmembrane spans lie at 9–29, 66–86, 88–108, 125–145, 149–169, 207–227, 266–286, 303–323, 339–359, and 370–390; these read LLGL…TWIA, VFYQ…LGGI, VTRF…YLIA, PLWI…GIAC, MILN…SYAI, IFVV…FFLN, FFLF…SIRL, LFKA…LPIF, AIVF…TLGC, and LILA…LLLV. Residues 247 to 267 are may be involved in recognition of long-chain fatty acids in GPI; it reads PNLGLWWYFFTEMFNEFRTFF.

This sequence belongs to the PIGU family. As to quaternary structure, forms a complex with PIG-S homolog, PIG-T homolog and GPI8.

The protein resides in the endoplasmic reticulum membrane. It participates in glycolipid biosynthesis; glycosylphosphatidylinositol-anchor biosynthesis. Its function is as follows. Component of the GPI transamidase complex. May be involved in the recognition of either the GPI attachment signal or the lipid portion of GPI. The chain is GPI transamidase component GAB1 homolog from Schizosaccharomyces pombe (strain 972 / ATCC 24843) (Fission yeast).